Here is a 365-residue protein sequence, read N- to C-terminus: 3-isopropylmalate dehydrogenase (365 aa).

Residue 80–91 coordinates NAD(+); it reads GPKWGTGSVRPE. Residues Arg-98, Arg-108, Arg-137, and Asp-226 each coordinate substrate. Residues Asp-226, Asp-251, and Asp-255 each coordinate Mg(2+). 290–301 contacts NAD(+); sequence GSAPDLPKGKVN.

The protein belongs to the isocitrate and isopropylmalate dehydrogenases family. In terms of assembly, homodimer. Mg(2+) is required as a cofactor. Mn(2+) serves as cofactor.

The protein localises to the cytoplasm. It carries out the reaction (2R,3S)-3-isopropylmalate + NAD(+) = 4-methyl-2-oxopentanoate + CO2 + NADH. It participates in amino-acid biosynthesis; L-leucine biosynthesis; L-leucine from 3-methyl-2-oxobutanoate: step 3/4. Its function is as follows. Catalyzes the oxidation of 3-carboxy-2-hydroxy-4-methylpentanoate (3-isopropylmalate) to 3-carboxy-4-methyl-2-oxopentanoate. The product decarboxylates to 4-methyl-2 oxopentanoate. This chain is 3-isopropylmalate dehydrogenase (LEU2), found in Maudiozyma exigua (Yeast).